The sequence spans 106 residues: Large ribosomal subunit protein uL24 (106 aa).

It belongs to the universal ribosomal protein uL24 family. As to quaternary structure, part of the 50S ribosomal subunit.

Functionally, one of two assembly initiator proteins, it binds directly to the 5'-end of the 23S rRNA, where it nucleates assembly of the 50S subunit. In terms of biological role, one of the proteins that surrounds the polypeptide exit tunnel on the outside of the subunit. This is Large ribosomal subunit protein uL24 from Blochmanniella floridana.